The following is a 406-amino-acid chain: 1H-pyrrole-2-carbonyl-[peptidyl-carrier protein] brominase (406 aa).

Positions 17, 36, 42, 44, 45, 48, 101, 124, 291, and 304 each coordinate FAD.

It belongs to the flavin-dependent halogenase family.

It catalyses the reaction (1H-pyrrole-2-carbonyl)-[peptidyl-carrier protein] + 3 bromide + 3 FADH2 + 3 O2 = (3,4,5-tribromo-1H-pyrrole-2-carbonyl)-[peptidyl-carrier protein] + 3 FAD + 6 H2O. The enzyme catalyses (1H-pyrrole-2-carbonyl)-[peptidyl-carrier protein] + bromide + FADH2 + O2 = (5-bromo-1H-pyrrole-2-carbonyl)-[peptidyl-carrier protein] + FAD + 2 H2O. It carries out the reaction (5-bromo-1H-pyrrole-2-carbonyl)-[peptidyl-carrier protein] + bromide + FADH2 + O2 = (4,5-dibromo-1H-pyrrole-2-carbonyl)-[peptidyl-carrier protein] + FAD + 2 H2O. The catalysed reaction is (4,5-dibromo-1H-pyrrole-2-carbonyl)-[peptidyl-carrier protein] + bromide + FADH2 + O2 = (3,4,5-tribromo-1H-pyrrole-2-carbonyl)-[peptidyl-carrier protein] + FAD + 2 H2O. Functionally, brominase involved in the biosynthesis of polybrominated aromatic organic compounds. Catalyzes three successive rounds of bromination of pyrrolyl-S-Bmp1 to produce mono-, di- and tribromopyrrolyl-S-Bmp1. This Pseudoalteromonas luteoviolacea (strain 2ta16) protein is 1H-pyrrole-2-carbonyl-[peptidyl-carrier protein] brominase.